A 1906-amino-acid polypeptide reads, in one-letter code: A disintegrin and metalloproteinase with thrombospondin motifs 20 (1906 aa).

A signal peptide spans 1–26; sequence MRVAKWLTGLLCPISLLLTGSWEVRF. The propeptide occupies 27 to 249; that stretch reads HPRQEALVKT…RSQLHSRNKR (223 aa). 2 N-linked (GlcNAc...) asparagine glycosylation sites follow: Asn-92 and Asn-221. The tract at residues 201–222 is disordered; the sequence is PCEVSENQMEKTALPSQSSRNT. Positions 255–464 constitute a Peptidase M12B domain; that stretch reads RYVEVMVTAD…GHGECLLDKP (210 aa). Intrachain disulfides connect Cys-330/Cys-383, Cys-359/Cys-365, Cys-377/Cys-459, Cys-415/Cys-443, Cys-486/Cys-508, Cys-497/Cys-518, Cys-503/Cys-537, Cys-531/Cys-542, Cys-565/Cys-602, Cys-569/Cys-607, and Cys-580/Cys-592. His-399 contributes to the Zn(2+) binding site. Residue Glu-400 is part of the active site. Residues His-403 and His-409 each contribute to the Zn(2+) site. One can recognise a Disintegrin domain in the interval 465-552; sequence NGRTYDLSPQ…VTRDMETRPV (88 aa). The TSP type-1 1 domain maps to 553 to 608; the sequence is DGEWGPWGPYSSCSRTCGGGIKSTARLCDRPEPRNGGRYCVGRRMKFRSCNTDSCP. Asn-714, Asn-798, and Asn-805 each carry an N-linked (GlcNAc...) asparagine glycan. The interval 721–842 is spacer; it reads AGVFNSAHYG…FNIPIEERSN (122 aa). TSP type-1 domains are found at residues 843-901, 906-962, 962-1015, 1017-1074, 1075-1131, 1148-1202, and 1203-1260; these read LFSW…MDCE, IIGK…GSCV, VLTR…NCNE, PCPS…RACA, SWHV…APCL, RAAQ…LCFS, and PCGE…AACP. Asn-1057 carries an N-linked (GlcNAc...) asparagine glycan. Positions 1265-1295 are disordered; that stretch reads RAPSSSEQPSHVPSRNVPLTHKPGENQDQGA. Over residues 1266–1277 the composition is skewed to polar residues; that stretch reads APSSSEQPSHVP. TSP type-1 domains follow at residues 1300–1351, 1354–1411, 1412–1465, 1468–1526, 1527–1584, 1585–1648, and 1650–1706; these read RGNQ…RHCG, PCPH…HACP, EDVS…KACR, RCPS…QDCM, RYQW…PHCK, YSVV…LRSC, and HVAT…NDCK. N-linked (GlcNAc...) asparagine glycosylation occurs at Asn-1562. Residues 1707–1906 enclose the GON domain; the sequence is LLTTCKELQV…MATGLSIQVL (200 aa). Asn-1719, Asn-1759, and Asn-1777 each carry an N-linked (GlcNAc...) asparagine glycan.

Zn(2+) serves as cofactor. Post-translationally, the precursor is cleaved by a furin endopeptidase. In terms of processing, glycosylated. Can be O-fucosylated by POFUT2 on a serine or a threonine residue found within the consensus sequence C1-X(2)-(S/T)-C2-G of the TSP type-1 repeat domains where C1 and C2 are the first and second cysteine residue of the repeat, respectively. Fucosylated repeats can then be further glycosylated by the addition of a beta-1,3-glucose residue by the glucosyltransferase, B3GALTL. Fucosylation mediates the efficient secretion of ADAMTS family members. Can also be C-glycosylated with one or two mannose molecules on tryptophan residues within the consensus sequence W-X-X-W of the TPRs, and N-glycosylated. These other glycosylations can also facilitate secretion. Expressed at low level in testis and brain.

It localises to the secreted. The protein resides in the extracellular space. It is found in the extracellular matrix. Functionally, may play a role in tissue-remodeling process occurring in both normal and pathological conditions. May have a protease-independent function in the transport from the endoplasmic reticulum to the Golgi apparatus of secretory cargos, mediated by the GON domain. The protein is A disintegrin and metalloproteinase with thrombospondin motifs 20 (Adamts20) of Mus musculus (Mouse).